Consider the following 261-residue polypeptide: Phosphatidylglycerol--prolipoprotein diacylglyceryl transferase (261 aa).

The next 4 membrane-spanning stretches (helical) occupy residues 13–33, 50–70, 86–106, and 112–132; these read LQIRWYSLSYIFGMIFAYWYI, VISWWVISVILGGRIGYILFY, WNGGMSFHGALVGVMIGMYIF, and IDVLAAFDLGACAVPVGIFFG. R133 is a binding site for a 1,2-diacyl-sn-glycero-3-phospho-(1'-sn-glycerol). 3 helical membrane-spanning segments follow: residues 169–189, 197–217, and 232–252; these read LYEAFGEGFLLFIITNSLFFF, GMLSSVFCIWYGVIRFFIEFV, and ITMGQLLSIFMIIMGFYFIKL.

The protein belongs to the Lgt family.

The protein resides in the cell inner membrane. It carries out the reaction L-cysteinyl-[prolipoprotein] + a 1,2-diacyl-sn-glycero-3-phospho-(1'-sn-glycerol) = an S-1,2-diacyl-sn-glyceryl-L-cysteinyl-[prolipoprotein] + sn-glycerol 1-phosphate + H(+). Its pathway is protein modification; lipoprotein biosynthesis (diacylglyceryl transfer). Functionally, catalyzes the transfer of the diacylglyceryl group from phosphatidylglycerol to the sulfhydryl group of the N-terminal cysteine of a prolipoprotein, the first step in the formation of mature lipoproteins. The protein is Phosphatidylglycerol--prolipoprotein diacylglyceryl transferase of Ehrlichia canis (strain Jake).